Reading from the N-terminus, the 334-residue chain is Syntaxin-18 (334 aa).

The Cytoplasmic segment spans residues 1-308; sequence MAVDITLLFR…EDIREAIKNN (308 aa). Disordered stretches follow at residues 29–50 and 166–225; these read GGADGSRDELFRRSPRPKGDFS and LSKL…GEDE. Basic and acidic residues-rich tracts occupy residues 33–50, 166–186, and 193–207; these read GSRDELFRRSPRPKGDFS, LSKLEPEPHTKRKEPASEKSS, and SEEKPAAEDLPEKPL. The t-SNARE coiled-coil homology domain occupies 242–304; the sequence is IGEMNSLFDE…KEGNEDIREA (63 aa). Residues 309–329 form a helical; Anchor for type IV membrane protein membrane-spanning segment; the sequence is AGFRVWILFFLVMCSFSLLFL. At 330–334 the chain is on the vesicular side; that stretch reads DWYDS.

This sequence belongs to the syntaxin family. Component of a SNARE complex consisting of STX18, USE1L, BNIP1/SEC20L, and SEC22B. RINT1/TIP20L and ZW10 are associated with the complex through interaction with BNIP1/SEC20L. Interacts directly with USE1L and BNIP1/SEC20L.

It localises to the endoplasmic reticulum membrane. Its subcellular location is the golgi apparatus membrane. In terms of biological role, syntaxin that may be involved in targeting and fusion of Golgi-derived retrograde transport vesicles with the ER. The protein is Syntaxin-18 (Stx18) of Rattus norvegicus (Rat).